The sequence spans 243 residues: Large ribosomal subunit protein uL2 (243 aa).

Residues 1 to 12 (MGRRIQGQRRGR) are compositionally biased toward basic residues. 2 disordered regions span residues 1-38 (MGRR…SDDT) and 198-243 (VDHP…GSSE). Composition is skewed to basic and acidic residues over residues 24–34 (YKAELSHKQSE) and 221–231 (PPGRKVGDIAS).

Belongs to the universal ribosomal protein uL2 family. Part of the 50S ribosomal subunit. Forms a bridge to the 30S subunit in the 70S ribosome.

One of the primary rRNA binding proteins. Required for association of the 30S and 50S subunits to form the 70S ribosome, for tRNA binding and peptide bond formation. It has been suggested to have peptidyltransferase activity; this is somewhat controversial. Makes several contacts with the 16S rRNA in the 70S ribosome. The protein is Large ribosomal subunit protein uL2 of Haloquadratum walsbyi (strain DSM 16790 / HBSQ001).